Reading from the N-terminus, the 155-residue chain is Large ribosomal subunit protein uL30 (155 aa).

It belongs to the universal ribosomal protein uL30 family. In terms of assembly, part of the 50S ribosomal subunit.

The protein is Large ribosomal subunit protein uL30 of Cenarchaeum symbiosum (strain A).